A 218-amino-acid polypeptide reads, in one-letter code: Large ribosomal subunit protein uL3 (218 aa).

2 disordered regions span residues 128–167 (FSRG…RMGG) and 199–218 (SLLN…QGGK).

It belongs to the universal ribosomal protein uL3 family. Part of the 50S ribosomal subunit. Forms a cluster with proteins L14 and L19.

Its function is as follows. One of the primary rRNA binding proteins, it binds directly near the 3'-end of the 23S rRNA, where it nucleates assembly of the 50S subunit. The sequence is that of Large ribosomal subunit protein uL3 from Prochlorococcus marinus (strain NATL2A).